A 429-amino-acid polypeptide reads, in one-letter code: Serine hydroxymethyltransferase (429 aa).

(6S)-5,6,7,8-tetrahydrofolate is bound by residues Leu126 and 130–132 (GHL). Lys235 carries the N6-(pyridoxal phosphate)lysine modification.

The protein belongs to the SHMT family. As to quaternary structure, homodimer. It depends on pyridoxal 5'-phosphate as a cofactor.

Its subcellular location is the cytoplasm. The enzyme catalyses (6R)-5,10-methylene-5,6,7,8-tetrahydrofolate + glycine + H2O = (6S)-5,6,7,8-tetrahydrofolate + L-serine. It participates in one-carbon metabolism; tetrahydrofolate interconversion. The protein operates within amino-acid biosynthesis; glycine biosynthesis; glycine from L-serine: step 1/1. Its function is as follows. Catalyzes the reversible interconversion of serine and glycine with tetrahydrofolate (THF) serving as the one-carbon carrier. This reaction serves as the major source of one-carbon groups required for the biosynthesis of purines, thymidylate, methionine, and other important biomolecules. Also exhibits THF-independent aldolase activity toward beta-hydroxyamino acids, producing glycine and aldehydes, via a retro-aldol mechanism. The sequence is that of Serine hydroxymethyltransferase from Zymomonas mobilis subsp. mobilis (strain ATCC 31821 / ZM4 / CP4).